Consider the following 711-residue polypeptide: DNA topoisomerase 3 (711 aa).

Positions 2–135 (KSLILAEKPS…LRRLWISSVT (134 aa)) constitute a Toprim domain. Mg(2+) is bound by residues Glu8 and Asp104. Positions 152–580 (YNDLYYAALA…EMKDFTKDVV (429 aa)) constitute a Topo IA-type catalytic domain. An interaction with DNA region spans residues 186-191 (SLGRVQ). The O-(5'-phospho-DNA)-tyrosine intermediate role is filled by Tyr305. The tract at residues 691-711 (MNKNEGLDNNPFKDALKNLNL) is disordered.

It belongs to the type IA topoisomerase family. Requires Mg(2+) as cofactor.

It carries out the reaction ATP-independent breakage of single-stranded DNA, followed by passage and rejoining.. Its function is as follows. Releases the supercoiling and torsional tension of DNA, which is introduced during the DNA replication and transcription, by transiently cleaving and rejoining one strand of the DNA duplex. Introduces a single-strand break via transesterification at a target site in duplex DNA. The scissile phosphodiester is attacked by the catalytic tyrosine of the enzyme, resulting in the formation of a DNA-(5'-phosphotyrosyl)-enzyme intermediate and the expulsion of a 3'-OH DNA strand. The free DNA strand then undergoes passage around the unbroken strand, thus removing DNA supercoils. Finally, in the religation step, the DNA 3'-OH attacks the covalent intermediate to expel the active-site tyrosine and restore the DNA phosphodiester backbone. The chain is DNA topoisomerase 3 from Staphylococcus aureus (strain MRSA252).